Consider the following 576-residue polypeptide: Epsin-1 (576 aa).

A 1,2-diacyl-sn-glycero-3-phospho-(1D-myo-inositol-4,5-bisphosphate) is bound by residues Arg8, Lys11, Arg25, Asn30, Arg63, and His73. Residues 12–144 (NIVHNYSEAE…RDEDRLREER (133 aa)) form the ENTH domain. The interval 149-185 (KTKEKLAQTATASSAAVGSGPPPEAEQAWPQSSGEEE) is disordered. A compositionally biased stretch (low complexity) spans 157–167 (TATASSAAVGS). 3 consecutive UIM domains span residues 183–202 (EEEL…ADQP), 208–227 (EDDA…HDKE), and 233–252 (GDDL…TGGK). Residues 265–296 (TAPAPAPTTDPWGGPAPMAAAVPTAAPTSDPW) show a composition bias toward low complexity. Positions 265 to 404 (TAPAPAPTTD…GGFDTEPDEF (140 aa)) are disordered. 8 repeat units span residues 274-276 (DPW), 294-296 (DPW), 306-308 (DPW), 319-321 (DPW), 332-334 (DPW), 349-351 (DPW), 367-369 (DPW), and 377-379 (DPW). Residues 274-379 (DPWGGPAPMA…TPAPAFSDPW (106 aa)) are 8 X 3 AA repeats of [ED]-P-W. Positions 297 to 314 (GGPPVPPAADPWGGPAPT) are enriched in pro residues. The segment covering 332–368 (DPWGGTPAPAAGEGPTPDPWGSSDGGVPVSGPSASDP) has biased composition (low complexity). Phosphoserine; by CDK1 is present on Ser382. Residues 402 to 411 (DEFSDFDRLR) carry the [DE]-X(1,2)-F-X-X-[FL]-X-X-X-R motif motif. Ser419, Ser420, Ser435, Ser447, and Ser454 each carry phosphoserine. The segment at 448–576 (LAEAVGSPPP…PAPNTNPFLL (129 aa)) is disordered. A compositionally biased stretch (pro residues) spans 454–468 (SPPPAATPTPTPPTR). Phosphothreonine is present on residues Thr460, Thr464, and Thr470. Ser473 is subject to Phosphoserine. A Phosphothreonine modification is found at Thr494. 2 consecutive repeat copies span residues 502 to 504 (NPF) and 518 to 520 (NPF). The 3 X 3 AA repeats of N-P-F stretch occupies residues 502 to 574 (NPFLPGGGPA…GPPAPNTNPF (73 aa)). Arg534 is subject to Omega-N-methylarginine. Pro residues predominate over residues 557–570 (GLPPMMPPGPPAPN). Repeat 3 spans residues 572–574 (NPF).

It belongs to the epsin family. Monomer. Binds clathrin, ZBTB16/ZNF145 and ITSN1. Binds ubiquitinated proteins. Binds AP2A1 and AP2A2. Interacts with RALBP1 in a complex also containing NUMB and TFAP2A during interphase and mitosis. Interacts with AP2B1. Interacts with UBQLN2. Interacts with REPS2; the interaction is direct. Interacts with EPS15; the interaction is direct. Interacts with ENTREP1. Post-translationally, phosphorylated on serine and/or threonine residues in mitotic cells. Phosphorylation reduces interaction with REPS2, AP-2 and the membrane fraction. Depolarization of synaptosomes results in dephosphorylation. Ubiquitinated.

The protein resides in the cytoplasm. The protein localises to the cell membrane. It localises to the nucleus. It is found in the membrane. Its subcellular location is the clathrin-coated pit. Binds to membranes enriched in phosphatidylinositol 4,5-bisphosphate (PtdIns(4,5)P2). Modifies membrane curvature and facilitates the formation of clathrin-coated invaginations. Regulates receptor-mediated endocytosis. The sequence is that of Epsin-1 (EPN1) from Homo sapiens (Human).